Reading from the N-terminus, the 353-residue chain is UPF0283 membrane protein YcjF (353 aa).

A compositionally biased stretch (basic and acidic residues) spans 1-19 (MSEPLKPRIDFAEPLKEEP). Residues 1 to 35 (MSEPLKPRIDFAEPLKEEPTSAFKAQQTFSEAESR) form a disordered region. Transmembrane regions (helical) follow at residues 70-90 (MVMGGLALFGASVVGQGVQWT), 100-120 (VALGGCAAGALIIGAGVGSVV), and 213-233 (ESTLMIAVSPLALVDMAFIAW).

The protein belongs to the UPF0283 family.

The protein localises to the cell inner membrane. In Salmonella paratyphi C (strain RKS4594), this protein is UPF0283 membrane protein YcjF.